A 256-amino-acid polypeptide reads, in one-letter code: Dihydromonacolin L-[lovastatin nonaketide synthase] thioesterase (256 aa).

Active-site charge relay system residues include S122, D201, and H229.

It belongs to the LovG family.

It catalyses the reaction dihydromonacolin L-[lovastatin nonaketide synthase] + H2O = holo-[lovastatin nonaketide synthase] + dihydromonacolin L carboxylate + H(+). It participates in polyketide biosynthesis; lovastatin biosynthesis. In terms of biological role, esterase; part of the gene cluster that mediates the biosynthesis of lovastatin (also known as mevinolin, mevacor or monacolin K), a hypolipidemic inhibitor of (3S)-hydroxymethylglutaryl-coenzyme A (HMG-CoA) reductase (HMGR). The first step in the biosynthesis of lovastatin is the production of dihydromonacolin L acid by the lovastatin nonaketide synthase lovB and the trans-acting enoyl reductase lovC via condensation of one acetyl-CoA unit and 8 malonyl-CoA units. Dihydromonacolin L acid is released from lovB by the thioesterase lovG. Next, dihydromonacolin L acid is oxidized by the dihydromonacolin L monooxygenase lovA twice to form monacolin J acid. The 2-methylbutyrate moiety of lovastatin is synthesized by the lovastatin diketide synthase lovF via condensation of one acetyl-CoA unit and one malonyl-CoA unit. Finally, the covalent attachment of this moiety to monacolin J acid is catalyzed by the transesterase lovD to yield lovastatin. LovD has broad substrate specificity and can also convert monacolin J to simvastatin using alpha-dimethylbutanoyl-S-methyl-3-mercaptopropionate (DMB-S-MMP) as the thioester acyl donor, and can also catalyze the reverse reaction and function as hydrolase in vitro. LovD has much higher activity with LovF-bound 2-methylbutanoate than with free diketide substrates. Functionally, esterase that catalyzes the release of covalently bound dihydromonacolin L from LovB during lovastatin biosynthesis. In Aspergillus terreus (strain NIH 2624 / FGSC A1156), this protein is Dihydromonacolin L-[lovastatin nonaketide synthase] thioesterase.